The sequence spans 92 residues: uncharacterized protein (92 aa).

This is an uncharacterized protein from Enterobacteria phage T4 (Bacteriophage T4).